An 813-amino-acid polypeptide reads, in one-letter code: Probable receptor-like protein kinase At5g39020 (813 aa).

Residues 1–21 (MNCNVLFLLSVLVSVTAGVTA) form the signal peptide. Topologically, residues 22–437 (AYHPTDVFLF…TPPIKGKPHV (416 aa)) are extracellular. Residues Asn46, Asn61, Asn165, Asn202, Asn213, Asn263, Asn286, Asn293, Asn384, and Asn401 are each glycosylated (N-linked (GlcNAc...) asparagine). A helical membrane pass occupies residues 438 to 458 (LVIILIVVGSVIGLATFIVII). At 459–813 (MLLIRQMKRK…QTQTLDSTII (355 aa)) the chain is on the cytoplasmic side. The Protein kinase domain occupies 496-771 (KSFSHTVGKG…KVVEMIEGSL (276 aa)). ATP is bound by residues 502 to 510 (VGKGGFGTV) and Lys524. Asp619 (proton acceptor) is an active-site residue. The segment at 791–813 (ESSSLSDGQEAEKQTQTLDSTII) is disordered. Residues 804–813 (QTQTLDSTII) show a composition bias toward polar residues.

This sequence belongs to the protein kinase superfamily. Ser/Thr protein kinase family.

It is found in the membrane. The protein is Probable receptor-like protein kinase At5g39020 of Arabidopsis thaliana (Mouse-ear cress).